The following is a 406-amino-acid chain: Endoplasmic reticulum resident protein 44 (406 aa).

Positions 1–29 (MIPGIFLSLPDLRCSLLLLVTWVFTPVTA) are cleaved as a signal peptide. In terms of domain architecture, Thioredoxin spans 30–138 (EIISLDTENI…VKALADYIRQ (109 aa)). 2 cysteine pairs are disulfide-bonded: Cys189–Cys241 and Cys301–Cys318. Positions 236-285 (WIQDKCVPLVREITFENGEELTEEGLPFLILFHMKEDTESLEIFQNEVAR) are interaction with ITPR1. The tract at residues 360–387 (FHHGPDPTDTAPGEEVQDVASSPPESSF) is disordered. The segment covering 378–387 (VASSPPESSF) has biased composition (polar residues). A Prevents secretion from ER motif is present at residues 403–406 (RDEL).

Forms mixed disulfides with both ERO1A and ERO1B and cargo folding intermediates; the interactions with ERO1A and ERO1B result in their retention in the endoplasmic reticulum. Directly interacts with ITPR1 in a pH-, redox state- and calcium-dependent manner, but not with ITPR2 or ITPR3. The strength of this interaction inversely correlates with calcium concentration.

It localises to the endoplasmic reticulum lumen. Functionally, mediates thiol-dependent retention in the early secretory pathway, forming mixed disulfides with substrate proteins through its conserved CRFS motif. Inhibits the calcium channel activity of ITPR1. May have a role in the control of oxidative protein folding in the endoplasmic reticulum. Required to retain ERO1A and ERO1B in the endoplasmic reticulum. The protein is Endoplasmic reticulum resident protein 44 (ERP44) of Bos taurus (Bovine).